The primary structure comprises 419 residues: Akuammiline synthase 1 (419 aa).

Catalysis depends on His-151, which acts as the Proton acceptor. Positions 206 to 213 (TRRFVFPA) match the Nuclear localization signal motif. Asp-359 functions as the Proton acceptor in the catalytic mechanism.

The protein belongs to the plant acyltransferase family. Monomer.

It is found in the cytoplasm. It localises to the nucleus. The catalysed reaction is rhazimol + acetyl-CoA = akuammiline + CoA + H(+). The protein operates within alkaloid biosynthesis. In terms of biological role, acyltransferase involved in the biosynthesis of akuammilan monoterpene indole alkaloids (MIAs) natural products, components with various biological properties such as antidiabetic, antibacterial, anti-inflammatory, anticancer, and antimalarial activities. Catalyzes the conversion of rhazimol to akuammiline. The polypeptide is Akuammiline synthase 1 (Alstonia scholaris (Dogbane)).